The following is a 337-amino-acid chain: Methionine import ATP-binding protein MetN (337 aa).

Residues 4-240 (IKNLEITYPG…PWHPITKEFV (237 aa)) enclose the ABC transporter domain. Residue 37-44 (GLSGAGKS) participates in ATP binding.

This sequence belongs to the ABC transporter superfamily. Methionine importer (TC 3.A.1.24) family. As to quaternary structure, the complex is composed of two ATP-binding proteins (MetN), two transmembrane proteins (MetI) and a solute-binding protein (MetQ).

It is found in the cell membrane. It catalyses the reaction L-methionine(out) + ATP + H2O = L-methionine(in) + ADP + phosphate + H(+). It carries out the reaction D-methionine(out) + ATP + H2O = D-methionine(in) + ADP + phosphate + H(+). Part of the ABC transporter complex MetNIQ involved in methionine import. Responsible for energy coupling to the transport system. The chain is Methionine import ATP-binding protein MetN from Carboxydothermus hydrogenoformans (strain ATCC BAA-161 / DSM 6008 / Z-2901).